The following is a 2752-amino-acid chain: Piezo-type mechanosensitive ion channel component 2 (2752 aa).

The Cytoplasmic segment spans residues 1 to 12; the sequence is MASEVVCGLIFR. A helical transmembrane segment spans residues 13–24; it reads LLLPICLAVACA. Topologically, residues 25–30 are extracellular; the sequence is FRYNGL. Residues 31–43 traverse the membrane as a helical segment; the sequence is SFVYLIYLLLIPL. At 44–50 the chain is on the cytoplasmic side; it reads FSEPTKT. The helical transmembrane segment at 51-76 threads the bilayer; sequence TMQGHTGRLLKSLCFISLSFLLLHII. At 77 to 122 the chain is on the extracellular side; the sequence is FHITLVSLEAQHRIAPGYNCSTWEKTFRQIGFESLKGADAGNGIRV. A glycan (N-linked (GlcNAc...) asparagine) is linked at N95. The helical transmembrane segment at 123-141 threads the bilayer; it reads FVPDIGMFIASLTIWLLCR. Residues 142–221 lie on the Cytoplasmic side of the membrane; the sequence is NIVQKPVTDE…KEFIGNMITT (80 aa). Residues 222–237 form a helical membrane-spanning segment; the sequence is AGKVVVTILLGSSGMM. Residues 238–240 lie on the Extracellular side of the membrane; sequence LPS. The chain crosses the membrane as a helical span at residues 241–258; that stretch reads LTSSVYFFVFLGLCTWWS. At 259–264 the chain is on the cytoplasmic side; sequence WCRTFD. Residues 265–287 traverse the membrane as a helical segment; sequence PLLFSCLCVLLAIFTAGHLIGLY. Over 288–335 the chain is Extracellular; the sequence is LYQFQFFQEAVPPNDYYARLFGIKSVIQTDCSSTWKIIVNPDLSWYHH. A helical transmembrane segment spans residues 336–355; that stretch reads ANPILLLVMYYTLATLIRIW. The Cytoplasmic segment spans residues 356-492; it reads LQEPLVQDEG…SIKVHAMVSV (137 aa). The tract at residues 446-478 is disordered; it reads STPQYRWEPSDESSEKREEEEEEKEEFEEERSR. Residues 463 to 474 are compositionally biased toward acidic residues; sequence EEEEEEKEEFEE. The chain crosses the membrane as a helical span at residues 493-514; it reads FQFIMKQSYICALIAMMAWSIT. The Extracellular portion of the chain corresponds to 515-519; that stretch reads YHSWL. Residues 520-531 form a helical membrane-spanning segment; sequence TFVLLIWSCTLW. Over 532–535 the chain is Cytoplasmic; the sequence is MIRN. Residues 536-562 form a helical membrane-spanning segment; the sequence is RRKYAMISSPFMVVYGNLLLILQYIWS. Topologically, residues 563-583 are extracellular; the sequence is FELPEIKKVPGFLEKKEPGEL. Residues 584–614 traverse the membrane as a helical segment; that stretch reads ASKILFTITFWLLLRQHLTEQKALQEKEALL. The Cytoplasmic portion of the chain corresponds to 615–685; sequence SEVKIGSQEN…GNLVVAMFIK (71 aa). The segment covering 623 to 632 has biased composition (acidic residues); the sequence is ENEEKDEELQ. The tract at residues 623–664 is disordered; the sequence is ENEEKDEELQDIQVEGEPKEEEEEEAKEEKQERKKVEQEEAE. The segment covering 649-660 has biased composition (basic and acidic residues); it reads KEEKQERKKVEQ. The helical transmembrane segment at 686 to 699 threads the bilayer; the sequence is YWIYVCGGMFFFVS. At 700–705 the chain is on the extracellular side; sequence FEGKIV. The chain crosses the membrane as a helical span at residues 706 to 724; that stretch reads MYKIIYMVLFLFCVALYQV. Residues 725 to 733 are Cytoplasmic-facing; that stretch reads HYEWWRKIL. Residues 734-753 form a helical membrane-spanning segment; that stretch reads KYFWMSVVIYTMLVLIFIYT. Over 754–785 the chain is Extracellular; that stretch reads YQFENFPGLWQNMTGLKKEKLEDLGLKQFTVA. Residues 786–807 traverse the membrane as a helical segment; the sequence is ELFTRIFIPTSFLLVCILHLHY. Residues 808–940 lie on the Cytoplasmic side of the membrane; sequence FHDRFLELTD…QVFMWWILEL (133 aa). The residue at position 838 (S838) is a Phosphoserine. The span at 862–883 shows a compositional bias: basic and acidic residues; it reads PGEEKLEGYSEKAQKGDLGKDS. A disordered region spans residues 862-902; it reads PGEEKLEGYSEKAQKGDLGKDSEESEEDGEEEEESEEEEET. The span at 884-902 shows a compositional bias: acidic residues; it reads EESEEDGEEEEESEEEEET. The chain crosses the membrane as a helical span at residues 941–956; that stretch reads HIIKIVSSYIIWVSVK. At 957–962 the chain is on the extracellular side; it reads EVSLFN. A helical transmembrane segment spans residues 963-972; that stretch reads YVFLISWAFA. The Cytoplasmic segment spans residues 973 to 980; the sequence is LPYAKLRR. The chain crosses the membrane as a helical span at residues 981–1001; that stretch reads LASSVCTVWTCVIIVCKMLYQ. Residues 1002-1057 lie on the Extracellular side of the membrane; that stretch reads LQTIKPENFSVNCSLPNENQTNIPFNELNKSLLYSAPIDPTEWVGLRKSSPLLVYL. Residue N1013 is glycosylated (N-linked (GlcNAc...) asparagine). An intrachain disulfide couples C1014 to C1192. Residues 1058 to 1082 form a helical membrane-spanning segment; it reads RNNLLMLAILAFEVTIYRHQEYYRG. Topologically, residues 1083–1123 are cytoplasmic; that stretch reads RNNLTAPVSRTIFHDITRLHLDDGLINCAKYFINYFFYKFG. Residues 1124–1138 form a helical membrane-spanning segment; it reads LETCFLMSVNVIGQR. The Extracellular segment spans residues 1139–1140; the sequence is MD. A helical transmembrane segment spans residues 1141–1154; that stretch reads FYAMIHACWLIAVL. The Cytoplasmic portion of the chain corresponds to 1155–1165; it reads YRRRRKAIAEI. Residues 1166–1185 form a helical membrane-spanning segment; it reads WPKYCCFLACIITFQYFICI. Topologically, residues 1186 to 1222 are extracellular; sequence GIPPAPCRDYPWRFKGASFNDNIIKWLYFPDFIVRPN. Residues 1223–1243 traverse the membrane as a helical segment; sequence PVFLVYDFMLLLCASLQRQIF. At 1244–1297 the chain is on the cytoplasmic side; sequence EDENKAAVRIMAGDNVEICMNLDAASFSQHNPVPDFIHCRSYLDMSKVIIFSYL. A helical transmembrane segment spans residues 1298–1310; that stretch reads FWFVLTIIFITGT. Residues 1311 to 1316 are Extracellular-facing; it reads TRISIF. Residues 1317 to 1329 form a helical membrane-spanning segment; it reads CMGYLVACFYFLL. Over 1330-1338 the chain is Cytoplasmic; the sequence is FGGDLLLKP. A helical membrane pass occupies residues 1339–1364; sequence IKSILRYWDWLIAYNVFVITMKNILS. The Extracellular segment spans residues 1365-1413; that stretch reads IGACGYIGTLVHNSCWLIQAFSLACTVKGYQMPAANSPCTLPSGEAGII. A helical transmembrane segment spans residues 1414 to 1430; it reads WDSICFAFLLLQRRVFM. At 1431-1921 the chain is on the cytoplasmic side; sequence SYYFLHVVAD…YAMYNTLVAR (491 aa). Positions 1458–1529 form a coiled coil; it reads TIVKAVKARI…EREADKQKAK (72 aa). Disordered stretches follow at residues 1488-1534, 1593-1636, and 1844-1868; these read QQKY…KKKQ, ALRQ…KKSD, and SQDD…KLGS. Positions 1594–1615 are enriched in basic residues; that stretch reads LRQRHKEKKRSAREERKRRRKG. A helical membrane pass occupies residues 1922 to 1936; sequence SEMVCYFVIILNHMV. Residues 1937–1943 lie on the Extracellular side of the membrane; sequence SASMITL. The chain crosses the membrane as a helical span at residues 1944–1955; it reads LLPILIFLWAML. Residues 1956 to 1961 lie on the Cytoplasmic side of the membrane; sequence SVPRPS. A helical membrane pass occupies residues 1962–1983; it reads RRFWMMAIVYTEVAIVVKYFFQ. At 1984-2016 the chain is on the extracellular side; sequence FGFFPWNKNVEVNKDKPYHPPNIIGVEKKEGYV. A helical transmembrane segment spans residues 2017 to 2035; that stretch reads LYDLIQLLALFFHRSILKC. The Cytoplasmic portion of the chain corresponds to 2036-2189; the sequence is HGLWDEDDMT…HPEYSAVTDV (154 aa). Disordered stretches follow at residues 2047-2069 and 2090-2135; these read SGMA…DSSD and QQTA…SVLS. Residues 2100 to 2127 are compositionally biased toward low complexity; sequence GSSSEPSQRSSFSSNRSQRGSTSTRNSS. The chain crosses the membrane as a helical span at residues 2190-2209; the sequence is YVLMFLADTVDFIIIVFGFW. At 2210 to 2231 the chain is on the extracellular side; it reads AFGKHSAAADITSSLSEDQVPG. Residues 2232–2252 traverse the membrane as a helical segment; sequence PFLVMVLIQFGTMVVDRALYL. Over 2253–2256 the chain is Cytoplasmic; that stretch reads RKTV. Residues 2257-2280 form a helical membrane-spanning segment; the sequence is LGKVIFQVILVFGIHFWMFFILPG. Residues 2281–2289 are Extracellular-facing; the sequence is VTERKFSQN. A helical membrane pass occupies residues 2290–2312; sequence LVAQLWYFVKCVYFGLSAYQIRC. Topologically, residues 2313 to 2397 are cytoplasmic; sequence GYPTRVLGNF…YPQPRGQKKK (85 aa). A helical transmembrane segment spans residues 2398–2421; sequence KVVKYGMGGMIIVLLICIVWFPLL. Residues 2422–2669 are Extracellular-facing; it reads FMSLIKSVAG…PSLGFLAGYG (248 aa). A helical transmembrane segment spans residues 2670-2690; it reads IMGLYASVVLVIGKFVREFFS. At 2691–2752 the chain is on the cytoplasmic side; the sequence is GISHSIMFEE…MIKWTREKTN (62 aa).

Belongs to the PIEZO (TC 1.A.75) family. As to quaternary structure, homotrimer; the homotrimer forms a propeller-shaped Piezo channel with a cation-ion conducting pore. Heterotrimeric interaction may occur between PIEZO1 and PIEZO2. Interacts with STOML3. Interacts with TMC7; the interaction inhibits PIEZO2-conducted mechanically activated currents. Interacts with TMC1; the interaction may be part of the MET complex. Interacts with MDFIC (via C-terminus); the interaction prolongs Piezo channel inactivation. Interacts with MDFI (via C-terminus); the interaction prolongs Piezo channel inactivation.

Its subcellular location is the cell membrane. It catalyses the reaction Ca(2+)(in) = Ca(2+)(out). Its activity is regulated as follows. Regulated by auxillary subunits MDFIC and MDFI. Channel activity is inhibited by TMEM120A. Phosphatidic acid and lysophosphatidic acid inhibit PIEZO2 channel activity. In terms of biological role, pore-forming subunit of the mechanosensitive non-specific cation Piezo channel required for rapidly adapting mechanically activated (MA) currents and has a key role in sensing touch and tactile pain. Piezo channels are homotrimeric three-blade propeller-shaped structures that utilize a cap-motion and plug-and-latch mechanism to gate their ion-conducting pathways. Expressed in sensory neurons, is essential for diverse physiological processes, including respiratory control, systemic metabolism, urinary function, and proprioception. Mediates airway stretch sensing, enabling efficient respiration at birth and maintaining normal breathing in adults. It regulates brown and beige adipose tissue morphology and function, preventing systemic hypermetabolism. In the lower urinary tract, acts as a sensor in both the bladder urothelium and innervating sensory neurons being required for bladder-stretch sensing and urethral micturition reflexes, ensuring proper urinary function. Additionally, PIEZO2 serves as the principal mechanotransducer in proprioceptors, facilitating proprioception and coordinated body movements. In inner ear hair cells, PIEZO1/2 subunits may constitute part of the mechanotransducer (MET) non-selective cation channel complex where they may act as pore-forming ion-conducting component in the complex. Required for Merkel-cell mechanotransduction. Plays a major role in light-touch mechanosensation. This Homo sapiens (Human) protein is Piezo-type mechanosensitive ion channel component 2.